The following is a 200-amino-acid chain: NADH-quinone oxidoreductase subunit C (200 aa).

It belongs to the complex I 30 kDa subunit family. NDH-1 is composed of 14 different subunits. Subunits NuoB, C, D, E, F, and G constitute the peripheral sector of the complex.

The protein resides in the cell inner membrane. It catalyses the reaction a quinone + NADH + 5 H(+)(in) = a quinol + NAD(+) + 4 H(+)(out). In terms of biological role, NDH-1 shuttles electrons from NADH, via FMN and iron-sulfur (Fe-S) centers, to quinones in the respiratory chain. The immediate electron acceptor for the enzyme in this species is believed to be ubiquinone. Couples the redox reaction to proton translocation (for every two electrons transferred, four hydrogen ions are translocated across the cytoplasmic membrane), and thus conserves the redox energy in a proton gradient. The polypeptide is NADH-quinone oxidoreductase subunit C (Burkholderia vietnamiensis (strain G4 / LMG 22486) (Burkholderia cepacia (strain R1808))).